The primary structure comprises 499 residues: Bifunctional purine biosynthesis protein PurH (499 aa).

Residues 1–144 form the MGS-like domain; the sequence is MIKRALISVF…KNFKDVVVLT (144 aa).

Belongs to the PurH family.

The catalysed reaction is (6R)-10-formyltetrahydrofolate + 5-amino-1-(5-phospho-beta-D-ribosyl)imidazole-4-carboxamide = 5-formamido-1-(5-phospho-D-ribosyl)imidazole-4-carboxamide + (6S)-5,6,7,8-tetrahydrofolate. It catalyses the reaction IMP + H2O = 5-formamido-1-(5-phospho-D-ribosyl)imidazole-4-carboxamide. It participates in purine metabolism; IMP biosynthesis via de novo pathway; 5-formamido-1-(5-phospho-D-ribosyl)imidazole-4-carboxamide from 5-amino-1-(5-phospho-D-ribosyl)imidazole-4-carboxamide (10-formyl THF route): step 1/1. The protein operates within purine metabolism; IMP biosynthesis via de novo pathway; IMP from 5-formamido-1-(5-phospho-D-ribosyl)imidazole-4-carboxamide: step 1/1. The chain is Bifunctional purine biosynthesis protein PurH from Clostridium botulinum (strain Okra / Type B1).